A 211-amino-acid polypeptide reads, in one-letter code: Phosphoribosyl-dephospho-CoA transferase (211 aa).

Catalysis depends on residues aspartate 136 and aspartate 138.

It belongs to the MdcG family.

The catalysed reaction is apo-[malonate decarboxylase ACP] + 2'-(5''-triphospho-alpha-D-ribosyl)-3'-dephospho-CoA = holo-[malonate decarboxylase ACP] + diphosphate. In terms of biological role, transfers 2'-(5-triphosphoribosyl)-3'-dephosphocoenzyme-A to the apo-[acyl-carrier-protein] of the malonate decarboxylase to yield holo-[acyl-carrier-protein]. The polypeptide is Phosphoribosyl-dephospho-CoA transferase (Pseudomonas syringae pv. tomato (strain ATCC BAA-871 / DC3000)).